The chain runs to 197 residues: Recombination protein RecR (197 aa).

The segment at Cys-57–Cys-72 adopts a C4-type zinc-finger fold. One can recognise a Toprim domain in the interval Thr-79–Pro-174.

Belongs to the RecR family.

In terms of biological role, may play a role in DNA repair. It seems to be involved in an RecBC-independent recombinational process of DNA repair. It may act with RecF and RecO. This Geotalea daltonii (strain DSM 22248 / JCM 15807 / FRC-32) (Geobacter daltonii) protein is Recombination protein RecR.